Consider the following 455-residue polypeptide: Protein FAM124B (455 aa).

The residue at position 49 (S49) is a Phosphoserine. Residues 270–322 (TSVSAKRTSEPRSQRNQGKRSQGHSLELPEPSGSPTSDRCAGTSWKSPGRSFQ) form a disordered region. Polar residues predominate over residues 313-322 (SWKSPGRSFQ).

The protein belongs to the FAM124 family. Interacts with CHD7 and CHD8.

Its subcellular location is the nucleus. This is Protein FAM124B (FAM124B) from Homo sapiens (Human).